A 909-amino-acid polypeptide reads, in one-letter code: Epithelial discoidin domain-containing receptor 1 (909 aa).

The first 18 residues, 1-18 (MGPEALSSLLLLLLVASG), serve as a signal peptide directing secretion. Residues 21–413 (DMKGHFDPAK…VAKAEGSPTA (393 aa)) are Extracellular-facing. Residues 31-181 (CRYALGMQDR…VCLRVELYGC (151 aa)) form the F5/8 type C domain. 2 disulfide bridges follow: cysteine 31–cysteine 181 and cysteine 70–cysteine 173. A compositionally biased stretch (low complexity) spans 45 to 60 (SDISASSSWSDSTAAR). The disordered stretch occupies residues 45–65 (SDISASSSWSDSTAARHSSDG). The tract at residues 188–363 (LSYTAPVGQT…LFSEISFISD (176 aa)) is DS-like domain. Residues asparagine 207, glutamine 226, aspartate 229, valine 231, tyrosine 249, and tyrosine 251 each contribute to the Ca(2+) site. Asparagine 207 carries N-linked (GlcNAc...) asparagine glycosylation. N-linked (GlcNAc...) asparagine glycosylation is present at asparagine 256. The cysteines at positions 299 and 344 are disulfide-linked. The Ca(2+) site is built by serine 356 and glutamate 357. Residues asparagine 366 and asparagine 390 are each glycosylated (N-linked (GlcNAc...) asparagine). The helical transmembrane segment at 414–434 (ILIGCLVAIILLLLLIIALML) threads the bilayer. The Cytoplasmic portion of the chain corresponds to 435–909 (WRLHWRRLLS…FLAEDALNTV (475 aa)). Positions 466-495 (ILINNRPGPREPPPYQEPRPRGNPPHSAPC) are disordered. A compositionally biased stretch (pro residues) spans 475–492 (REPPPYQEPRPRGNPPHS). The PPxY motif motif lies at 477–480 (PPPY). Tyrosine 480, tyrosine 509, and tyrosine 516 each carry phosphotyrosine; by autocatalysis. One can recognise a Protein kinase domain in the interval 606 to 901 (LRFKEKLGEG…PPFSQLHRFL (296 aa)). 612-620 (LGEGQFGEV) contributes to the ATP binding site. A Phosphoserine modification is found at serine 627. Residue lysine 651 coordinates ATP. At tyrosine 736 the chain carries Phosphotyrosine; by autocatalysis. Catalysis depends on aspartate 762, which acts as the Proton acceptor. A phosphotyrosine; by autocatalysis mark is found at tyrosine 788, tyrosine 792, and tyrosine 793.

The protein belongs to the protein kinase superfamily. Tyr protein kinase family. Insulin receptor subfamily. As to quaternary structure, homodimer. Interacts (via PPxY motif) with WWC1 (via WW domains) in a collagen-regulated manner. Forms a tripartite complex with WWC1 and PRKCZ, but predominantly in the absence of collagen. Interacts (tyrosine phosphorylated) with SHC1. Interacts with SRC. Interacts with MYH9. Interacts with CDH1. Interacts with PTPN11. Interacts with NCK2. In terms of processing, autophosphorylated in response to fibrillar collagen binding.

Its subcellular location is the cell membrane. The enzyme catalyses L-tyrosyl-[protein] + ATP = O-phospho-L-tyrosyl-[protein] + ADP + H(+). Its function is as follows. Tyrosine kinase that functions as a cell surface receptor for fibrillar collagen and regulates cell attachment to the extracellular matrix, remodeling of the extracellular matrix, cell migration, differentiation, survival and cell proliferation. Collagen binding triggers a signaling pathway that involves SRC and leads to the activation of MAP kinases. Regulates remodeling of the extracellular matrix by up-regulation of the matrix metalloproteinases MMP2, MMP7 and MMP9, and thereby facilitates cell migration and wound healing. Promotes smooth muscle cell migration, and thereby contributes to arterial wound healing. Also plays a role in tumor cell invasion. Phosphorylates PTPN11. Required for normal blastocyst implantation during pregnancy, for normal mammary gland differentiation and normal lactation. Required for normal ear morphology and normal hearing. The protein is Epithelial discoidin domain-containing receptor 1 (DDR1) of Pan troglodytes (Chimpanzee).